Here is a 332-residue protein sequence, read N- to C-terminus: Olfactory receptor 10G6 (332 aa).

Topologically, residues 1-46 are extracellular; the sequence is MLEGVEHLLLLLLLTDVNSKELQSGNQTSVSHFILVGLHHPPQLGA. Residue N26 is glycosylated (N-linked (GlcNAc...) asparagine). A helical membrane pass occupies residues 47 to 67; sequence PLFLAFLVIYLLTVSGNGLII. The Cytoplasmic segment spans residues 68-75; it reads LTVLVDIR. Residues 76–96 traverse the membrane as a helical segment; sequence LHRPMCLFLCHLSFLDMTISC. The Extracellular segment spans residues 97–120; the sequence is AIVPKMLAGFLLGSRIISFGGCVI. A disulfide bridge links C118 with C210. Residues 121 to 141 traverse the membrane as a helical segment; the sequence is QLFSFHFLGCTECFLYTLMAY. The Cytoplasmic segment spans residues 142-160; the sequence is DRFLAICKPLHYATIMTHR. The chain crosses the membrane as a helical span at residues 161 to 181; the sequence is VCNSLALGTWLGGTIHSLFQT. Residues 182-218 are Extracellular-facing; it reads SFVFRLPFCGPNRVDYIFCDIPAMLRLACADTAINEL. A helical membrane pass occupies residues 219 to 238; the sequence is VTFADIGFLALTCFMLILTS. The Cytoplasmic segment spans residues 239 to 258; that stretch reads YGYIVAAILRIPSADGRRNA. A helical membrane pass occupies residues 259–279; sequence FSTCAAHLTVVIVYYVPCTFI. Over 280–290 the chain is Extracellular; sequence YLRPCSQEPLD. A helical transmembrane segment spans residues 291–311; the sequence is GVVAVFYTVITPLLNSIIYTL. At 312–332 the chain is on the cytoplasmic side; it reads CNKEMKAALQRLGGHKEVQPH.

Belongs to the G-protein coupled receptor 1 family.

Its subcellular location is the cell membrane. Its function is as follows. Odorant receptor. This chain is Olfactory receptor 10G6 (OR10G6), found in Homo sapiens (Human).